The sequence spans 417 residues: UPF0597 protein Cphy_1256 (417 aa).

Belongs to the UPF0597 family.

This is UPF0597 protein Cphy_1256 from Lachnoclostridium phytofermentans (strain ATCC 700394 / DSM 18823 / ISDg) (Clostridium phytofermentans).